The sequence spans 402 residues: Na(+)/H(+) antiporter NhaA 2 (402 aa).

A run of 11 helical transmembrane segments spans residues 18-38 (AGGI…NTAL), 63-83 (ALLW…GLEV), 99-119 (SLPL…FYGI), 129-149 (GWAI…ALLG), 158-178 (ALLL…IAIF), 182-202 (GVEL…SAFG), 210-230 (IPYI…GVHA), 258-278 (ALHS…NAGV), 296-316 (IALG…WLAV), 329-349 (WLQV…SLFI), and 365-385 (IGVL…LVLG).

The protein belongs to the NhaA Na(+)/H(+) (TC 2.A.33) antiporter family.

It is found in the cell inner membrane. It carries out the reaction Na(+)(in) + 2 H(+)(out) = Na(+)(out) + 2 H(+)(in). Its function is as follows. Na(+)/H(+) antiporter that extrudes sodium in exchange for external protons. This chain is Na(+)/H(+) antiporter NhaA 2, found in Erythrobacter litoralis (strain HTCC2594).